A 347-amino-acid chain; its full sequence is MRSLLLLFGGRSQEHSVSYASARALLEHICDEWTVIPVGITKHGDFVYCSTVSEQDYGEVIDNGNRVVWPSRAGCKKIEVVQARGKSFFVEFDLVFPLLHGVFGEDGTIQGMLDLLDIPYVGSGVFASAAAMDKHYTKILCSHAGIPVLPWYLIKGHAWHKNRDSFLKQISDRFTFPLFVKPVDAGSSFGCTFVDFFEQLPVAIEHALQHGKSAIVEPALDAPEVFCSLIENNGVLQCSELVFVKHSGSKFYDYSAKYLNPVEFVIPAQFDNTDGYAEIASKVFFELGCRHYARIDFFVTESGLVLNEINTSPGLTQKSIFPSSFKSMQYSQVIETILASAYCQVKR.

The ATP-grasp domain maps to 138–339 (KILCSHAGIP…YSQVIETILA (202 aa)). Position 171–226 (171–226 (SDRFTFPLFVKPVDAGSSFGCTFVDFFEQLPVAIEHALQHGKSAIVEPALDAPEVF)) interacts with ATP. Positions 296, 308, and 310 each coordinate Mg(2+).

The protein belongs to the D-alanine--D-alanine ligase family. Requires Mg(2+) as cofactor. It depends on Mn(2+) as a cofactor.

It localises to the cytoplasm. The enzyme catalyses 2 D-alanine + ATP = D-alanyl-D-alanine + ADP + phosphate + H(+). It participates in cell wall biogenesis; peptidoglycan biosynthesis. In terms of biological role, cell wall formation. The polypeptide is D-alanine--D-alanine ligase (Tropheryma whipplei (strain TW08/27) (Whipple's bacillus)).